The sequence spans 322 residues: Beta-ketoacyl-[acyl-carrier-protein] synthase III (322 aa).

Catalysis depends on residues Cys113 and His249. Residues Gln250–Arg254 are ACP-binding. The active site involves Asn279.

Belongs to the thiolase-like superfamily. FabH family. As to quaternary structure, homodimer.

The protein localises to the cytoplasm. The enzyme catalyses malonyl-[ACP] + acetyl-CoA + H(+) = 3-oxobutanoyl-[ACP] + CO2 + CoA. It functions in the pathway lipid metabolism; fatty acid biosynthesis. Its function is as follows. Catalyzes the condensation reaction of fatty acid synthesis by the addition to an acyl acceptor of two carbons from malonyl-ACP. Catalyzes the first condensation reaction which initiates fatty acid synthesis and may therefore play a role in governing the total rate of fatty acid production. Possesses both acetoacetyl-ACP synthase and acetyl transacylase activities. Its substrate specificity determines the biosynthesis of branched-chain and/or straight-chain of fatty acids. The protein is Beta-ketoacyl-[acyl-carrier-protein] synthase III of Marinobacter nauticus (strain ATCC 700491 / DSM 11845 / VT8) (Marinobacter aquaeolei).